The sequence spans 273 residues: MLTPTISKSISLVTILLVLQAFSNTTKAQNCGCSSELCCSQFGFCGNTSDYCGVGCQQGPCFAPPPANGVSVAEIVTQEFFNGIISQAASSCAGNRFYSRGAFLEALDSYSRFGRVGSTDDSRREIAAFFAHVTHETGHFCYIEEIDGASKDYCDENATQYPCNPNKGYYGRGPIQLSWNFNYGPAGTAIGFDGLNAPETVATDPVISFKTALWYWTNRVQPVISQGFGATIRAINGALECDGANTATVQARVRYYTDYCRQLGVDPGNNLTC.

The signal sequence occupies residues 1–28; sequence MLTPTISKSISLVTILLVLQAFSNTTKA. An N-linked (GlcNAc...) asparagine glycan is attached at asparagine 24. The Chitin-binding type-1 domain occupies 29-63; that stretch reads QNCGCSSELCCSQFGFCGNTSDYCGVGCQQGPCFA. Intrachain disulfides connect cysteine 31–cysteine 39, cysteine 33–cysteine 45, cysteine 38–cysteine 52, and cysteine 56–cysteine 61. Residue asparagine 47 is glycosylated (N-linked (GlcNAc...) asparagine). Positions 70–273 are catalytic; it reads VSVAEIVTQE…GVDPGNNLTC (204 aa). Catalysis depends on glutamate 136, which acts as the Proton donor. N-linked (GlcNAc...) asparagine glycans are attached at residues asparagine 157 and asparagine 270.

Belongs to the glycosyl hydrolase 19 family. Chitinase class I subfamily. Expressed in cells surrounding embryos, stems, seedlings, pollen, roots, shoots, inflorescence, flowers, siliques and leaves. Present in seedpods and seed embryos, but not in roots, inflorescence stems, leaves and flowers.

It carries out the reaction Random endo-hydrolysis of N-acetyl-beta-D-glucosaminide (1-&gt;4)-beta-linkages in chitin and chitodextrins.. Functionally, probably involved in hypersensitive reaction upon Xanthomonas campestris infection. The sequence is that of Endochitinase EP3 from Arabidopsis thaliana (Mouse-ear cress).